Here is a 120-residue protein sequence, read N- to C-terminus: Cytochrome c2 iso-1 (120 aa).

Residue Gln1 is modified to Pyrrolidone carboxylic acid. Heme c-binding residues include Cys15, Cys18, His19, and Met98.

This sequence belongs to the cytochrome c family. Binds 1 heme c group covalently per subunit.

Cytochrome c2 is found mainly in purple, non-sulfur, photosynthetic bacteria where it functions as the electron donor to the oxidized bacteriochlorophyll in the photophosphorylation pathway. However, it may also have a role in the respiratory chain and is found in some non-photosynthetic bacteria. The protein is Cytochrome c2 iso-1 of Rhodospirillum centenum (Rhodocista centenaria).